A 1264-amino-acid chain; its full sequence is TBC1 domain family member 9 (1264 aa).

2 consecutive GRAM domains span residues 146–213 (VKFH…EKNA) and 293–361 (ERYR…EKAD). A disordered region spans residues 410–456 (KEFSGSCNSSDDEVYSRPSSLVSSSPQRSTSSDADGERPFNLNGNSV). A compositionally biased stretch (low complexity) spans 425 to 441 (SRPSSLVSSSPQRSTSS). Positions 515 to 702 (GIPESMRGEL…VVVDCFFYEG (188 aa)) constitute a Rab-GAP TBC domain. In terms of domain architecture, EF-hand spans 886–921 (HSDVLASRLFQLLDENGDSLINFREFVSGLSAACHG). Residues 1119-1138 (SEEHSLGGQMEDIKLEDSSP) are compositionally biased toward basic and acidic residues. Residues 1119 to 1162 (SEEHSLGGQMEDIKLEDSSPRDNGACSSMLISDDDTKDDSSMSS) form a disordered region.

May act as a GTPase-activating protein for Rab family protein(s). In Mus musculus (Mouse), this protein is TBC1 domain family member 9 (Tbc1d9).